Reading from the N-terminus, the 303-residue chain is Ribosomal RNA small subunit methyltransferase H (303 aa).

Residues 36-38 (CGH), aspartate 55, phenylalanine 81, aspartate 101, and glutamine 108 each bind S-adenosyl-L-methionine.

Belongs to the methyltransferase superfamily. RsmH family.

Its subcellular location is the cytoplasm. The catalysed reaction is cytidine(1402) in 16S rRNA + S-adenosyl-L-methionine = N(4)-methylcytidine(1402) in 16S rRNA + S-adenosyl-L-homocysteine + H(+). Functionally, specifically methylates the N4 position of cytidine in position 1402 (C1402) of 16S rRNA. This is Ribosomal RNA small subunit methyltransferase H from Aster yellows witches'-broom phytoplasma (strain AYWB).